The sequence spans 327 residues: GDP-mannose transporter (327 aa).

Residues 1-4 are Cytoplasmic-facing; it reads MESS. A helical transmembrane segment spans residues 5–25; it reads LAAIANSGPISIFSYCVSSIL. Residues 26–36 are Lumenal-facing; it reads MTVTNKYVLSG. A helical transmembrane segment spans residues 37–57; the sequence is FSFNMNFLLLAVQSIVCIVTI. The Cytoplasmic segment spans residues 58–78; sequence GSLKSFGVITYRQFNKEEARK. The helical transmembrane segment at 79–93 threads the bilayer; it reads WSPIAVLLVIMIYTS. The Lumenal segment spans residues 94 to 102; that stretch reads SKALQYLSI. The helical transmembrane segment at 103 to 125 threads the bilayer; that stretch reads PVYTIFKNLTIILIAYGEVLWFG. Over 126–131 the chain is Cytoplasmic; the sequence is GKVTTM. A helical transmembrane segment spans residues 132–149; that stretch reads ALSSFLLMVFSSVVAWYG. Residues 150 to 163 lie on the Lumenal side of the membrane; sequence DEAVSGSGNESFIA. An N-linked (GlcNAc...) asparagine glycan is attached at Asn158. The chain crosses the membrane as a helical span at residues 164-184; the sequence is LYLGYFWMATNCFASAAFVLI. Topologically, residues 185-207 are cytoplasmic; the sequence is MRKRIKLTNFKDFDTMYYNNLLS. A helical membrane pass occupies residues 208–228; that stretch reads IPILLASSIIFEDWSAENLAV. The Lumenal portion of the chain corresponds to 229–238; that stretch reads NFPSDNRTAT. N-linked (GlcNAc...) asparagine glycosylation is present at Asn234. Residues 239–259 form a helical membrane-spanning segment; sequence IAAMVLSGASSVGISYCSAWC. The Cytoplasmic portion of the chain corresponds to 260-266; sequence VRVTSST. Residues 267 to 289 traverse the membrane as a helical segment; it reads TYSMVGALNKLPIALSGLVFFPA. The Lumenal portion of the chain corresponds to 290–292; that stretch reads AVN. Residues 293–312 traverse the membrane as a helical segment; the sequence is FWSVASIFVGFAAGLVYAVA. Topologically, residues 313-327 are cytoplasmic; that stretch reads KQRQQKENVSLPSSK.

It belongs to the TPT transporter family. SLC35D subfamily. Homooligomer.

The protein resides in the golgi apparatus membrane. It localises to the cytoplasmic vesicle membrane. Its subcellular location is the endoplasmic reticulum membrane. Functionally, involved in the import of GDP-mannose from the cytoplasm into the Golgi lumen. This Scheffersomyces stipitis (strain ATCC 58785 / CBS 6054 / NBRC 10063 / NRRL Y-11545) (Yeast) protein is GDP-mannose transporter (VRG4).